Consider the following 205-residue polypeptide: Large ribosomal subunit protein bL25 (205 aa).

Positions P185–A205 are disordered. Residues A186–A205 are compositionally biased toward low complexity.

Belongs to the bacterial ribosomal protein bL25 family. CTC subfamily. In terms of assembly, part of the 50S ribosomal subunit; part of the 5S rRNA/L5/L18/L25 subcomplex. Contacts the 5S rRNA. Binds to the 5S rRNA independently of L5 and L18.

This is one of the proteins that binds to the 5S RNA in the ribosome where it forms part of the central protuberance. The polypeptide is Large ribosomal subunit protein bL25 (Cupriavidus taiwanensis (strain DSM 17343 / BCRC 17206 / CCUG 44338 / CIP 107171 / LMG 19424 / R1) (Ralstonia taiwanensis (strain LMG 19424))).